Reading from the N-terminus, the 564-residue chain is MDIFRVLTRGASVKKESGPKAKAADYSVINGKDENHKEDNNESQIVKELDFFRNKRIISKVEDDREKTTENDSPNKEEKSGNDDGLIKPVITNTVEASALRKSYKGNVSGIDIPLPIGSFEDLISRFSFDRRLLNNLIENGFTEPTPIQCECIPVALNNRDVLACGPTGSGKTLAFLIPLVQQIIDDKQTAGLKGLIISPTKELANQIFIECFKLSHKIFLEKKRPLQVALLSKSLGAKLKNKVVSDKKYDIIISTPLRLIDVVKNEALDLSKVKHLIFDEADKLFDKTFVEQSDDILSACREPSLRKAMFSATIPSNVEEIAQSIMMDPVRVIIGHKEAANTNIEQKLIFCGNEEGKLIAIRQLVQEGEFKPPIIIFLESITRAKALYHELMYDRINVDVIHAERTALQRDRIIERFKTGELWCLICTDVLARGIDFKGVNLVINYDVPGSSQAYVHRIGRTGRGGRSGKAITFYTKQDSVAIKPIINVMKQSGCEVSEWMDKMAKMTRKEKESIKNGKAHKERKQITTVPKMDKAKRRRQQEMIAASKRRKNEELSKKHFSK.

Disordered stretches follow at residues 1–25 (MDIF…KAAD) and 62–87 (EDDR…DGLI). Composition is skewed to basic and acidic residues over residues 13 to 23 (VKKESGPKAKA) and 62 to 86 (EDDR…DDGL). Residues 122–150 (DLISRFSFDRRLLNNLIENGFTEPTPIQC) carry the Q motif motif. One can recognise a Helicase ATP-binding domain in the interval 153 to 333 (IPVALNNRDV…QSIMMDPVRV (181 aa)). Residue 166–173 (GPTGSGKT) coordinates ATP. Positions 280 to 283 (DEAD) match the DEAD box motif. A Helicase C-terminal domain is found at 344 to 506 (NIEQKLIFCG…EVSEWMDKMA (163 aa)). Positions 512–564 (EKESIKNGKAHKERKQITTVPKMDKAKRRRQQEMIAASKRRKNEELSKKHFSK) are disordered. The segment covering 553–564 (KNEELSKKHFSK) has biased composition (basic and acidic residues).

It belongs to the DEAD box helicase family. DDX52/ROK1 subfamily. In terms of assembly, interacts with the U3 snoRNA and is associated with the 90S and 40S pre-ribosomes. This association requires the presence of RRP5. Also interacts with OSH3.

It localises to the nucleus. Its subcellular location is the nucleolus. It carries out the reaction ATP + H2O = ADP + phosphate + H(+). Functionally, ATP-dependent RNA helicase involved in 40S ribosomal subunit biogenesis. Required for the processing and cleavage of 35S pre-rRNA at sites A0, A1, and A2, leading to mature 18S rRNA. The sequence is that of ATP-dependent RNA helicase ROK1 (ROK1) from Saccharomyces cerevisiae (strain YJM789) (Baker's yeast).